We begin with the raw amino-acid sequence, 107 residues long: Endonuclease ALBA3 (107 aa).

N6-acetyllysine occurs at positions 23 and 32.

The protein belongs to the histone-like Alba family. In terms of assembly, homodimer. Interacts (acetylated and unacetylated) with Sir2A. Requires a divalent metal cation as cofactor. Acetylated. Exists in both acetylated and unacetylated forms but predominantly in an acetylated form. Deacetylated by Sir2A.

Its subcellular location is the nucleus. The protein resides in the chromosome. The protein localises to the telomere. It is found in the cytoplasm. Mild acetylation lowers protein interaction with DNA and high acetylation abolishes DNA-binding activity. DNA binding and endonuclease activity is modulated via deacetylation of Lys-23 by Sir2A. Inhibited in the presence of EDTA and EGTA. Functionally, possesses DNA-binding and endonuclease activities. Binds DNA cooperatively in sequence-independent manner at the DNA minor groove. Exhibits apurinic/apyrimidinic site-driven endonuclease activity. Binds RNA; shows high affinity for poly(A) and a lower affinity for poly(U) templates. In vitro, prevents transcription after DNA binding. Associates with the telomeric region, the subtelomeric TARE6 repeat sequence and the var gene promoters. This Plasmodium falciparum (isolate 3D7) protein is Endonuclease ALBA3.